Consider the following 134-residue polypeptide: ATP synthase epsilon chain (134 aa).

The protein belongs to the ATPase epsilon chain family. F-type ATPases have 2 components, CF(1) - the catalytic core - and CF(0) - the membrane proton channel. CF(1) has five subunits: alpha(3), beta(3), gamma(1), delta(1), epsilon(1). CF(0) has three main subunits: a, b and c.

It is found in the cell inner membrane. Its function is as follows. Produces ATP from ADP in the presence of a proton gradient across the membrane. This chain is ATP synthase epsilon chain, found in Sinorhizobium fredii (strain NBRC 101917 / NGR234).